Here is a 292-residue protein sequence, read N- to C-terminus: ATP phosphoribosyltransferase (292 aa).

The protein belongs to the ATP phosphoribosyltransferase family. Long subfamily. Requires Mg(2+) as cofactor.

The protein resides in the cytoplasm. It catalyses the reaction 1-(5-phospho-beta-D-ribosyl)-ATP + diphosphate = 5-phospho-alpha-D-ribose 1-diphosphate + ATP. Its pathway is amino-acid biosynthesis; L-histidine biosynthesis; L-histidine from 5-phospho-alpha-D-ribose 1-diphosphate: step 1/9. Its activity is regulated as follows. Feedback inhibited by histidine. Its function is as follows. Catalyzes the condensation of ATP and 5-phosphoribose 1-diphosphate to form N'-(5'-phosphoribosyl)-ATP (PR-ATP). Has a crucial role in the pathway because the rate of histidine biosynthesis seems to be controlled primarily by regulation of HisG enzymatic activity. This chain is ATP phosphoribosyltransferase, found in Thermodesulfovibrio yellowstonii (strain ATCC 51303 / DSM 11347 / YP87).